Consider the following 289-residue polypeptide: (3R)-3-[(carboxymethyl)amino]fatty acid oxygenase/decarboxylase (289 aa).

A (3R)-3-[(carboxymethyl)amino]fatty acid-binding residues include Y65, Y70, and G93. 2 residues coordinate Fe(2+): H97 and D99. Residues Y100 and K158 each contribute to the a (3R)-3-[(carboxymethyl)amino]fatty acid site. H260 contacts Fe(2+). H264 provides a ligand contact to 2-oxoglutarate. R275 serves as a coordination point for a (3R)-3-[(carboxymethyl)amino]fatty acid.

The protein belongs to the TfdA dioxygenase family. It depends on Fe(2+) as a cofactor.

It carries out the reaction a (3R)-3-[(carboxymethyl)amino]fatty acid + 2 2-oxoglutarate + 2 O2 = a (3R)-3-isocyanyl-fatty acid + 2 succinate + 3 CO2 + 2 H2O. The enzyme catalyses a (3R)-3-[(carboxymethyl)amino]fatty acid + 2-oxoglutarate + O2 = a (3R)-3-{[carboxy(hydroxy)methyl]amino}fatty acid + succinate + CO2. The catalysed reaction is a (3R)-3-{[carboxy(hydroxy)methyl]amino}fatty acid + 2-oxoglutarate + O2 = a (3R)-3-isocyanyl-fatty acid + succinate + 2 CO2 + 2 H2O. Its function is as follows. Involved in the biosynthesis of a unique class of isonitrile lipopeptides (INLPs) that seem to play a role in metal acquisition in M.marinum. Catalyzes the conversion of (3R)-3-[(carboxymethyl)amino]fatty acids to (3R)-3-isocyanyl-fatty acids through an oxidative decarboxylation mechanism, thereby generating the isonitrile group of INLPs. The chain is (3R)-3-[(carboxymethyl)amino]fatty acid oxygenase/decarboxylase from Mycobacterium marinum (strain ATCC BAA-535 / M).